The chain runs to 245 residues: Orotidine 5'-phosphate decarboxylase (245 aa).

Substrate-binding positions include Asp22, Lys44, 71-80, Thr131, Arg192, Gln201, Gly221, and Arg222; that span reads DLKFHDIPNT. Lys73 serves as the catalytic Proton donor.

The protein belongs to the OMP decarboxylase family. Type 1 subfamily. Homodimer.

It carries out the reaction orotidine 5'-phosphate + H(+) = UMP + CO2. It participates in pyrimidine metabolism; UMP biosynthesis via de novo pathway; UMP from orotate: step 2/2. Catalyzes the decarboxylation of orotidine 5'-monophosphate (OMP) to uridine 5'-monophosphate (UMP). This is Orotidine 5'-phosphate decarboxylase from Shigella boydii serotype 18 (strain CDC 3083-94 / BS512).